A 61-amino-acid chain; its full sequence is Small ribosomal subunit protein uS14 (61 aa).

Zn(2+) contacts are provided by C24, C27, C40, and C43.

This sequence belongs to the universal ribosomal protein uS14 family. Zinc-binding uS14 subfamily. As to quaternary structure, part of the 30S ribosomal subunit. Contacts proteins S3 and S10. Zn(2+) is required as a cofactor.

In terms of biological role, binds 16S rRNA, required for the assembly of 30S particles and may also be responsible for determining the conformation of the 16S rRNA at the A site. This is Small ribosomal subunit protein uS14 from Thermotoga maritima (strain ATCC 43589 / DSM 3109 / JCM 10099 / NBRC 100826 / MSB8).